The primary structure comprises 460 residues: Kynurenine 3-monooxygenase (460 aa).

This sequence belongs to the aromatic-ring hydroxylase family. KMO subfamily. FAD serves as cofactor.

The protein resides in the mitochondrion. It carries out the reaction L-kynurenine + NADPH + O2 + H(+) = 3-hydroxy-L-kynurenine + NADP(+) + H2O. It functions in the pathway cofactor biosynthesis; NAD(+) biosynthesis; quinolinate from L-kynurenine: step 1/3. Catalyzes the hydroxylation of L-kynurenine (L-Kyn) to form 3-hydroxy-L-kynurenine (L-3OHKyn). Required for synthesis of quinolinic acid. In Dictyostelium discoideum (Social amoeba), this protein is Kynurenine 3-monooxygenase.